The chain runs to 217 residues: UPF0502 protein ESA_02280 (217 aa).

This sequence belongs to the UPF0502 family.

The sequence is that of UPF0502 protein ESA_02280 from Cronobacter sakazakii (strain ATCC BAA-894) (Enterobacter sakazakii).